We begin with the raw amino-acid sequence, 723 residues long: Threonine--tRNA ligase, mitochondrial (723 aa).

S57 is subject to Phosphoserine. Positions 64–126 (RAIKISLPEG…ETDCHLRFLT (63 aa)) constitute a TGS domain.

It belongs to the class-II aminoacyl-tRNA synthetase family. Homodimer.

The protein resides in the mitochondrion matrix. It catalyses the reaction tRNA(Thr) + L-threonine + ATP = L-threonyl-tRNA(Thr) + AMP + diphosphate + H(+). In terms of biological role, catalyzes the attachment of threonine to tRNA(Thr) in a two-step reaction: threonine is first activated by ATP to form Thr-AMP and then transferred to the acceptor end of tRNA(Thr). Also edits incorrectly charged tRNA(Thr) via its editing domain. In Mus musculus (Mouse), this protein is Threonine--tRNA ligase, mitochondrial (Tars2).